A 109-amino-acid polypeptide reads, in one-letter code: UPF0060 membrane protein PCC8801_1733 (109 aa).

Transmembrane regions (helical) follow at residues 7–27, 36–56, 58–78, and 87–107; these read LLYF…VWLW, YALL…LQTA, FGRV…LWGW, and SYDW…MYAP.

It belongs to the UPF0060 family.

Its subcellular location is the cell inner membrane. This is UPF0060 membrane protein PCC8801_1733 from Rippkaea orientalis (strain PCC 8801 / RF-1) (Cyanothece sp. (strain PCC 8801)).